We begin with the raw amino-acid sequence, 138 residues long: Acidic phospholipase A2 beta (138 aa).

Residues 1–16 (MRTLWIVAVLLLGVEG) form the signal peptide. Cystine bridges form between Cys-42-Cys-131, Cys-44-Cys-60, Cys-59-Cys-111, Cys-65-Cys-138, Cys-66-Cys-104, Cys-73-Cys-97, and Cys-91-Cys-102. Tyr-43, Gly-45, and Gly-47 together coordinate Ca(2+). His-63 is a catalytic residue. Asp-64 is a binding site for Ca(2+). Asp-105 is an active-site residue.

The protein belongs to the phospholipase A2 family. Group II subfamily. D49 sub-subfamily. As to quaternary structure, dimer. The cofactor is Ca(2+). As to expression, expressed by the venom gland.

It localises to the secreted. The catalysed reaction is a 1,2-diacyl-sn-glycero-3-phosphocholine + H2O = a 1-acyl-sn-glycero-3-phosphocholine + a fatty acid + H(+). PLA2 catalyzes the calcium-dependent hydrolysis of the 2-acyl groups in 3-sn-phosphoglycerides. This Crotalus adamanteus (Eastern diamondback rattlesnake) protein is Acidic phospholipase A2 beta.